A 332-amino-acid chain; its full sequence is Methionine synthase (332 aa).

Zn(2+)-binding residues include His211, Cys213, and Cys296.

It belongs to the archaeal MetE family. It depends on Zn(2+) as a cofactor.

It participates in amino-acid biosynthesis; L-methionine biosynthesis via de novo pathway. Its function is as follows. Catalyzes the transfer of a methyl group to L-homocysteine resulting in methionine formation. The physiological methyl donor is unknown. This chain is Methionine synthase, found in Saccharolobus islandicus (strain Y.N.15.51 / Yellowstone #2) (Sulfolobus islandicus).